The chain runs to 87 residues: Chaperone NapD (87 aa).

The protein belongs to the NapD family. As to quaternary structure, interacts with the cytoplasmic NapA precursor.

The protein localises to the cytoplasm. Functionally, chaperone for NapA, the catalytic subunit of the periplasmic nitrate reductase. It binds directly and specifically to the twin-arginine signal peptide of NapA, preventing premature interaction with the Tat translocase and premature export. The polypeptide is Chaperone NapD (Escherichia coli O157:H7).